The primary structure comprises 199 residues: Ribonuclease HII (199 aa).

An RNase H type-2 domain is found at 10-199; that stretch reads HLVAGVDEVG…VKRALGLASN (190 aa). Residues Asp-16, Glu-17, and Asp-108 each contribute to the a divalent metal cation site.

This sequence belongs to the RNase HII family. The cofactor is Mn(2+). Mg(2+) is required as a cofactor.

The protein resides in the cytoplasm. The enzyme catalyses Endonucleolytic cleavage to 5'-phosphomonoester.. Endonuclease that specifically degrades the RNA of RNA-DNA hybrids. This chain is Ribonuclease HII, found in Klebsiella pneumoniae subsp. pneumoniae (strain ATCC 700721 / MGH 78578).